A 395-amino-acid polypeptide reads, in one-letter code: Lipoyl synthase, mitochondrial (395 aa).

Residues 1–14 (MISLRSISRSPAVQ) constitute a mitochondrion transit peptide. Residues cysteine 112, cysteine 117, cysteine 123, cysteine 142, cysteine 146, cysteine 149, and serine 357 each contribute to the [4Fe-4S] cluster site. One can recognise a Radical SAM core domain in the interval 127 to 346 (KKSEATATIM…RDTALQMGFL (220 aa)).

This sequence belongs to the radical SAM superfamily. Lipoyl synthase family. The cofactor is [4Fe-4S] cluster.

It is found in the mitochondrion. It catalyses the reaction [[Fe-S] cluster scaffold protein carrying a second [4Fe-4S](2+) cluster] + N(6)-octanoyl-L-lysyl-[protein] + 2 oxidized [2Fe-2S]-[ferredoxin] + 2 S-adenosyl-L-methionine + 4 H(+) = [[Fe-S] cluster scaffold protein] + N(6)-[(R)-dihydrolipoyl]-L-lysyl-[protein] + 4 Fe(3+) + 2 hydrogen sulfide + 2 5'-deoxyadenosine + 2 L-methionine + 2 reduced [2Fe-2S]-[ferredoxin]. Its pathway is protein modification; protein lipoylation via endogenous pathway; protein N(6)-(lipoyl)lysine from octanoyl-[acyl-carrier-protein]: step 2/2. Catalyzes the radical-mediated insertion of two sulfur atoms into the C-6 and C-8 positions of the octanoyl moiety bound to the lipoyl domains of lipoate-dependent enzymes, thereby converting the octanoylated domains into lipoylated derivatives. This chain is Lipoyl synthase, mitochondrial, found in Debaryomyces hansenii (strain ATCC 36239 / CBS 767 / BCRC 21394 / JCM 1990 / NBRC 0083 / IGC 2968) (Yeast).